A 110-amino-acid chain; its full sequence is Large ribosomal subunit protein uL22 (110 aa).

The protein belongs to the universal ribosomal protein uL22 family. Part of the 50S ribosomal subunit.

This protein binds specifically to 23S rRNA; its binding is stimulated by other ribosomal proteins, e.g. L4, L17, and L20. It is important during the early stages of 50S assembly. It makes multiple contacts with different domains of the 23S rRNA in the assembled 50S subunit and ribosome. Its function is as follows. The globular domain of the protein is located near the polypeptide exit tunnel on the outside of the subunit, while an extended beta-hairpin is found that lines the wall of the exit tunnel in the center of the 70S ribosome. The sequence is that of Large ribosomal subunit protein uL22 from Histophilus somni (strain 2336) (Haemophilus somnus).